The following is a 347-amino-acid chain: S-adenosylmethionine:tRNA ribosyltransferase-isomerase (347 aa).

This sequence belongs to the QueA family. In terms of assembly, monomer.

Its subcellular location is the cytoplasm. The catalysed reaction is 7-aminomethyl-7-carbaguanosine(34) in tRNA + S-adenosyl-L-methionine = epoxyqueuosine(34) in tRNA + adenine + L-methionine + 2 H(+). The protein operates within tRNA modification; tRNA-queuosine biosynthesis. Functionally, transfers and isomerizes the ribose moiety from AdoMet to the 7-aminomethyl group of 7-deazaguanine (preQ1-tRNA) to give epoxyqueuosine (oQ-tRNA). The polypeptide is S-adenosylmethionine:tRNA ribosyltransferase-isomerase (Streptococcus thermophilus (strain CNRZ 1066)).